Here is a 513-residue protein sequence, read N- to C-terminus: Microcin J25-processing protein McjC (513 aa).

One can recognise an Asparagine synthetase domain in the interval 176-436 (STIDSIIDNI…FGSDIFWKKT (261 aa)).

Its subcellular location is the cytoplasm. Along with McjB, necessary and sufficient to process the inactive microcin J25 (McjA) precursor into the active peptide. May be involved in the formation of the amide bond between Gly-38 and Glu-53 of McjA. This chain is Microcin J25-processing protein McjC (mcjC), found in Escherichia coli.